The sequence spans 538 residues: Chaperonin GroEL (538 aa).

ATP-binding positions include 29-32 (TLGP), 86-90 (DGTTT), G413, 479-481 (DAL), and D495.

Belongs to the chaperonin (HSP60) family. Forms a cylinder of 14 subunits composed of two heptameric rings stacked back-to-back. Interacts with the co-chaperonin GroES.

Its subcellular location is the cytoplasm. The enzyme catalyses ATP + H2O + a folded polypeptide = ADP + phosphate + an unfolded polypeptide.. Together with its co-chaperonin GroES, plays an essential role in assisting protein folding. The GroEL-GroES system forms a nano-cage that allows encapsulation of the non-native substrate proteins and provides a physical environment optimized to promote and accelerate protein folding. This is Chaperonin GroEL from Fervidobacterium nodosum (strain ATCC 35602 / DSM 5306 / Rt17-B1).